Here is an 85-residue protein sequence, read N- to C-terminus: Beta-defensin 18 (85 aa).

Residues 1–23 (MQSAMKLFFIFLIFVFSVSCGPS) form the signal peptide. 3 cysteine pairs are disulfide-bonded: Cys-39-Cys-65, Cys-46-Cys-60, and Cys-50-Cys-66.

This sequence belongs to the beta-defensin family.

It localises to the secreted. In terms of biological role, has antibacterial activity. The chain is Beta-defensin 18 (Defb18) from Rattus norvegicus (Rat).